A 402-amino-acid chain; its full sequence is uncharacterized protein (402 aa).

A run of 12 helical transmembrane segments spans residues 23–43 (IVSV…PLAV), 52–72 (LGYG…ATLL), 90–110 (VLYG…SVAI), 121–141 (LLVG…AAIG), 158–178 (WNGI…VLLV), 180–200 (WLGL…GFAL), 228–248 (GMGL…ITLY), 255–275 (ANAV…RLLF), 282–302 (LGGF…LLLL), 309–329 (WVGL…FPAF), 351–371 (LFVD…ANLF), and 375–395 (SMFL…VALH).

This sequence belongs to the major facilitator superfamily. YhhS family.

The protein resides in the cell inner membrane. This is an uncharacterized protein from Pseudomonas aeruginosa (strain ATCC 15692 / DSM 22644 / CIP 104116 / JCM 14847 / LMG 12228 / 1C / PRS 101 / PAO1).